The sequence spans 207 residues: uncharacterized protein (207 aa).

Disordered stretches follow at residues 1-81 and 140-169; these read MNPT…GNTR and TSQS…PPKK. Over residues 21 to 40 the composition is skewed to polar residues; it reads FEQTNSSASLTQKNSSSETE. Residues 58–70 show a composition bias toward basic residues; sequence PTKRGSGRGRGRS. The span at 140-152 shows a compositional bias: polar residues; the sequence is TSQSIDAQPTPSQ. Basic and acidic residues predominate over residues 156–165; sequence AHHEPHEKRG.

Its subcellular location is the nucleus. It is found in the nucleolus. This is an uncharacterized protein from Schizosaccharomyces pombe (strain 972 / ATCC 24843) (Fission yeast).